The chain runs to 315 residues: Holliday junction branch migration complex subunit RuvB (315 aa).

The large ATPase domain (RuvB-L) stretch occupies residues 1-168 (MAKKQEIRPK…FGLIGQISNY (168 aa)). ATP is bound by residues Ile7, Arg8, Gly49, Lys52, Thr53, Ser54, 115 to 117 (EDF), Arg158, Tyr168, and Arg205. Residue Thr53 participates in Mg(2+) binding. The segment at 169–239 (QVEDIEKIIK…LVNKTLKQLG (71 aa)) is small ATPAse domain (RuvB-S). The segment at 242–315 (ENGLNESQVK…QKGISYLERI (74 aa)) is head domain (RuvB-H). The DNA site is built by Lys297 and Arg302.

Belongs to the RuvB family. As to quaternary structure, homohexamer. Forms an RuvA(8)-RuvB(12)-Holliday junction (HJ) complex. HJ DNA is sandwiched between 2 RuvA tetramers; dsDNA enters through RuvA and exits via RuvB. An RuvB hexamer assembles on each DNA strand where it exits the tetramer. Each RuvB hexamer is contacted by two RuvA subunits (via domain III) on 2 adjacent RuvB subunits; this complex drives branch migration. In the full resolvosome a probable DNA-RuvA(4)-RuvB(12)-RuvC(2) complex forms which resolves the HJ.

It localises to the cytoplasm. It carries out the reaction ATP + H2O = ADP + phosphate + H(+). The RuvA-RuvB-RuvC complex processes Holliday junction (HJ) DNA during genetic recombination and DNA repair, while the RuvA-RuvB complex plays an important role in the rescue of blocked DNA replication forks via replication fork reversal (RFR). RuvA specifically binds to HJ cruciform DNA, conferring on it an open structure. The RuvB hexamer acts as an ATP-dependent pump, pulling dsDNA into and through the RuvAB complex. RuvB forms 2 homohexamers on either side of HJ DNA bound by 1 or 2 RuvA tetramers; 4 subunits per hexamer contact DNA at a time. Coordinated motions by a converter formed by DNA-disengaged RuvB subunits stimulates ATP hydrolysis and nucleotide exchange. Immobilization of the converter enables RuvB to convert the ATP-contained energy into a lever motion, pulling 2 nucleotides of DNA out of the RuvA tetramer per ATP hydrolyzed, thus driving DNA branch migration. The RuvB motors rotate together with the DNA substrate, which together with the progressing nucleotide cycle form the mechanistic basis for DNA recombination by continuous HJ branch migration. Branch migration allows RuvC to scan DNA until it finds its consensus sequence, where it cleaves and resolves cruciform DNA. The protein is Holliday junction branch migration complex subunit RuvB of Mycoplasmopsis pulmonis (strain UAB CTIP) (Mycoplasma pulmonis).